The following is a 71-amino-acid chain: Biotinylated protein TB7.3 homolog (71 aa).

Residues 2 to 71 (AEDVRAEIVA…QAGDLIAVIS (70 aa)) form the Biotinyl-binding domain. N6-biotinyllysine is present on Lys-37.

The protein is Biotinylated protein TB7.3 homolog of Mycobacterium leprae (strain TN).